Here is an 831-residue protein sequence, read N- to C-terminus: Prickle-like protein 1 (831 aa).

Positions 14–122 (FGCQRSSTSD…TIKLLSRAVM (109 aa)) constitute a PET domain. 3 LIM zinc-binding domains span residues 124-189 (AVCE…LLKP), 189-249 (PRCS…LYAE), and 249-313 (EYCE…EDVH). A disordered region spans residues 313–342 (HASDSSDSAFQSARSRDSRRSVRMGKSSRS). 3 positions are modified to phosphoserine: Ser-315, Ser-591, and Ser-594. Disordered regions lie at residues 663–688 (FEER…NALN) and 763–831 (CSSS…CIIS). Over residues 669 to 680 (RSHHHRRRRSRK) the composition is skewed to basic residues. Residue Ser-683 is modified to Phosphoserine. Basic residues predominate over residues 815-831 (TKSKKKKGHKGKNCIIS). Cys-828 is subject to Cysteine methyl ester. Cys-828 is lipidated: S-farnesyl cysteine. A propeptide spans 829 to 831 (IIS) (removed in mature form).

It belongs to the prickle / espinas / testin family. In terms of assembly, interacts with REST. As to expression, expressed at highest levels in placenta and at lower levels in lung, liver, kidney and pancreas. Expressed in thalamus, hippocampus, cerebral cortex, and cerebellum (in neurons rather than glia).

It localises to the nucleus membrane. Its subcellular location is the cytoplasm. The protein localises to the cytosol. Its function is as follows. Involved in the planar cell polarity pathway that controls convergent extension during gastrulation and neural tube closure. Convergent extension is a complex morphogenetic process during which cells elongate, move mediolaterally, and intercalate between neighboring cells, leading to convergence toward the mediolateral axis and extension along the anteroposterior axis. Necessary for nuclear localization of REST. May serve as nuclear receptor. The protein is Prickle-like protein 1 (PRICKLE1) of Homo sapiens (Human).